A 230-amino-acid chain; its full sequence is Lactate utilization protein C (230 aa).

The protein belongs to the LutC/YkgG family.

Its function is as follows. Is involved in L-lactate degradation and allows cells to grow with lactate as the sole carbon source. In Exiguobacterium sp. (strain ATCC BAA-1283 / AT1b), this protein is Lactate utilization protein C.